The primary structure comprises 195 residues: Flavin prenyltransferase UbiX (195 aa).

FMN is bound by residues 17 to 19 (GGS), S43, 94 to 97 (SAGT), and R129. Dimethylallyl phosphate contacts are provided by Y159 and R175.

The protein belongs to the UbiX/PAD1 family.

The catalysed reaction is dimethylallyl phosphate + FMNH2 = prenylated FMNH2 + phosphate. Flavin prenyltransferase that catalyzes the synthesis of the prenylated FMN cofactor (prenyl-FMN) for 4-hydroxy-3-polyprenylbenzoic acid decarboxylase UbiD. The prenyltransferase is metal-independent and links a dimethylallyl moiety from dimethylallyl monophosphate (DMAP) to the flavin N5 and C6 atoms of FMN. This is Flavin prenyltransferase UbiX from Deinococcus radiodurans (strain ATCC 13939 / DSM 20539 / JCM 16871 / CCUG 27074 / LMG 4051 / NBRC 15346 / NCIMB 9279 / VKM B-1422 / R1).